We begin with the raw amino-acid sequence, 410 residues long: Multifunctional CCA protein (410 aa).

Residues Gly8 and Arg11 each contribute to the ATP site. CTP is bound by residues Gly8 and Arg11. The Mg(2+) site is built by Asp21 and Asp23. Residues Arg91, Arg138, and Arg141 each contribute to the ATP site. CTP contacts are provided by Arg91, Arg138, and Arg141. The HD domain maps to 229–347 (TGIHQEMVSD…AQLALVCEAD (119 aa)).

This sequence belongs to the tRNA nucleotidyltransferase/poly(A) polymerase family. Bacterial CCA-adding enzyme type 1 subfamily. In terms of assembly, monomer. Can also form homodimers and oligomers. The cofactor is Mg(2+). Ni(2+) is required as a cofactor.

It carries out the reaction a tRNA precursor + 2 CTP + ATP = a tRNA with a 3' CCA end + 3 diphosphate. The catalysed reaction is a tRNA with a 3' CCA end + 2 CTP + ATP = a tRNA with a 3' CCACCA end + 3 diphosphate. Catalyzes the addition and repair of the essential 3'-terminal CCA sequence in tRNAs without using a nucleic acid template. Adds these three nucleotides in the order of C, C, and A to the tRNA nucleotide-73, using CTP and ATP as substrates and producing inorganic pyrophosphate. tRNA 3'-terminal CCA addition is required both for tRNA processing and repair. Also involved in tRNA surveillance by mediating tandem CCA addition to generate a CCACCA at the 3' terminus of unstable tRNAs. While stable tRNAs receive only 3'-terminal CCA, unstable tRNAs are marked with CCACCA and rapidly degraded. The sequence is that of Multifunctional CCA protein from Xanthomonas euvesicatoria pv. vesicatoria (strain 85-10) (Xanthomonas campestris pv. vesicatoria).